Consider the following 347-residue polypeptide: DnaJ homolog subfamily C member 22 (347 aa).

The 47-residue stretch at Gly4–Trp50 folds into the TM2 domain. Transmembrane regions (helical) follow at residues Leu5–Leu25, Leu32–Leu52, Phe81–Phe101, Phe105–Gly125, Leu135–Ile155, Gly186–Val206, and Phe218–Leu238. A J domain is found at Leu277–Phe347.

It localises to the membrane. Its function is as follows. May function as a co-chaperone. This is DnaJ homolog subfamily C member 22 (DNAJC22) from Bos taurus (Bovine).